The chain runs to 159 residues: Deoxyuridine 5'-triphosphate nucleotidohydrolase (159 aa).

DUMP-binding residues include Ser-79, Gly-92, Asp-95, Tyr-98, Lys-103, Arg-148, Phe-153, and Gly-154.

Belongs to the dUTPase family. As to quaternary structure, homotrimer. Mg(2+) is required as a cofactor.

It catalyses the reaction dUTP + H2O = dUMP + diphosphate + H(+). It participates in pyrimidine metabolism; dUMP biosynthesis; dUMP from dCTP (dUTP route): step 2/2. Functionally, involved in nucleotide metabolism via production of dUMP, the immediate precursor of thymidine nucleotides, and decreases the intracellular concentration of dUTP so that uracil cannot be incorporated into DNA. The protein is Deoxyuridine 5'-triphosphate nucleotidohydrolase (DUT1) of Candida albicans (strain SC5314 / ATCC MYA-2876) (Yeast).